The primary structure comprises 446 residues: Probable D-serine dehydratase (446 aa).

Lysine 116 is modified (N6-(pyridoxal phosphate)lysine).

Belongs to the serine/threonine dehydratase family. DsdA subfamily. Pyridoxal 5'-phosphate is required as a cofactor.

The catalysed reaction is D-serine = pyruvate + NH4(+). This is Probable D-serine dehydratase from Bacillus thuringiensis subsp. konkukian (strain 97-27).